Consider the following 68-residue polypeptide: Protein DsrB (68 aa).

Belongs to the DsrB family.

This Sodalis glossinidius (strain morsitans) protein is Protein DsrB.